The chain runs to 503 residues: 3-octaprenyl-4-hydroxybenzoate carboxy-lyase (503 aa).

Residue asparagine 176 participates in Mn(2+) binding. Prenylated FMN contacts are provided by residues 179–181, 193–195, and 198–199; these read IYR, RWL, and RG. Glutamate 242 is a Mn(2+) binding site. Aspartate 303 acts as the Proton donor in catalysis.

The protein belongs to the UbiD family. In terms of assembly, homohexamer. It depends on prenylated FMN as a cofactor. The cofactor is Mn(2+).

It is found in the cell membrane. It catalyses the reaction a 4-hydroxy-3-(all-trans-polyprenyl)benzoate + H(+) = a 2-(all-trans-polyprenyl)phenol + CO2. It participates in cofactor biosynthesis; ubiquinone biosynthesis. Functionally, catalyzes the decarboxylation of 3-octaprenyl-4-hydroxy benzoate to 2-octaprenylphenol, an intermediate step in ubiquinone biosynthesis. This chain is 3-octaprenyl-4-hydroxybenzoate carboxy-lyase, found in Ralstonia pickettii (strain 12J).